The sequence spans 298 residues: Protoheme IX farnesyltransferase (298 aa).

A run of 9 helical transmembrane segments spans residues leucine 29 to leucine 49, phenylalanine 51 to leucine 71, glutamate 97 to isoleucine 117, leucine 120 to leucine 140, isoleucine 148 to glycine 168, leucine 175 to tyrosine 195, isoleucine 221 to serine 241, glycine 243 to leucine 263, and tyrosine 278 to leucine 298.

Belongs to the UbiA prenyltransferase family. Protoheme IX farnesyltransferase subfamily.

It is found in the cell inner membrane. The catalysed reaction is heme b + (2E,6E)-farnesyl diphosphate + H2O = Fe(II)-heme o + diphosphate. The protein operates within porphyrin-containing compound metabolism; heme O biosynthesis; heme O from protoheme: step 1/1. Converts heme B (protoheme IX) to heme O by substitution of the vinyl group on carbon 2 of heme B porphyrin ring with a hydroxyethyl farnesyl side group. This is Protoheme IX farnesyltransferase from Dechloromonas aromatica (strain RCB).